Consider the following 196-residue polypeptide: MAGVFKTVTFLVLVFAAVVVFAEDYDVGDDTEWTRPMDPEFYTTWATGKTFRVGDELEFDFAAGRHDVAVVSEAAFENCEKEKPISHMTVPPVKIMLNTTGPQYFICTVGDHCRFGQKLSITVVAAGATGGATPGAGATPAPGSTPSTGGTTPPTAGGTTTPSGSSGTTTPAGNAASSLGGATFLVAFVSAVVALF.

The N-terminal stretch at 1–22 (MAGVFKTVTFLVLVFAAVVVFA) is a signal peptide. The 103-residue stretch at 23-125 (EDYDVGDDTE…GQKLSITVVA (103 aa)) folds into the Phytocyanin domain. Residue H66 coordinates Cu cation. C79 and C113 are joined by a disulfide. N-linked (GlcNAc...) asparagine glycosylation occurs at N98. Residues C107, H112, and Q117 each coordinate Cu cation. Positions 133–173 (TPGAGATPAPGSTPSTGGTTPPTAGGTTTPSGSSGTTTPAG) are disordered. The span at 135 to 173 (GAGATPAPGSTPSTGGTTPPTAGGTTTPSGSSGTTTPAG) shows a compositional bias: low complexity. N174 carries the GPI-anchor amidated asparagine lipid modification. Residues 175–196 (AASSLGGATFLVAFVSAVVALF) constitute a propeptide, removed in mature form.

Its subcellular location is the cell membrane. Functionally, probably acts as an electron carrier. In Arabidopsis thaliana (Mouse-ear cress), this protein is Blue copper protein (BCB).